The sequence spans 199 residues: Superoxide dismutase [Mn/Fe] (199 aa).

His27, His81, Asp161, and His165 together coordinate Fe(3+). Positions 27, 81, 161, and 165 each coordinate Mn(2+).

This sequence belongs to the iron/manganese superoxide dismutase family. In terms of assembly, homodimer. The cofactor is Mn(2+). Fe(3+) serves as cofactor.

It catalyses the reaction 2 superoxide + 2 H(+) = H2O2 + O2. Functionally, destroys superoxide anion radicals which are normally produced within the cells and which are toxic to biological systems. Catalyzes the dismutation of superoxide anion radicals into O2 and H2O2 by successive reduction and oxidation of the transition metal ion at the active site. This is Superoxide dismutase [Mn/Fe] (sodA) from Staphylococcus haemolyticus (strain JCSC1435).